The chain runs to 128 residues: Spore germination protein 1/2/3-related protein (128 aa).

The N-terminal stretch at 1–26 is a signal peptide; it reads MNIRNTLVLLVSTVLVLMSCSIGCYA. N-linked (GlcNAc...) asparagine glycosylation is found at Asn55 and Asn119.

This sequence belongs to the Dictyostelium gerABC family.

Its subcellular location is the secreted. The chain is Spore germination protein 1/2/3-related protein from Dictyostelium discoideum (Social amoeba).